A 331-amino-acid chain; its full sequence is MAAVDRFNLLYREISRSCSVYIEALAIVGAWYTVRKCLTLVFNTYSMIRLHALPKLVGEIDIVKRYGRWAVVTGSTDGIGKAYAEELAKRGVNIILISRSKEKLEAVSRSISETYKVETDFIVADFSKGREAYQAIKEGLKDREIGILVNNVGLFYTYPDYFTNLSEDMLWDMINVNIASANMMVHIVLPGMVEKRKGAIVNVSSASCCQPTPMLTTYGASKAYLDYFSRALYYEYASKGIFVQSLTPFVIATRMVSCSRVTSKRSFFFPSAEEYASHAISTLGLSKRTPGYWKHSIEFTLGERLPEWIWAWFAQYFCRIIRKEALTHKAK.

Positions 2–82 (AAVDRFNLLY…TGSTDGIGKA (81 aa)) are required for mitochondria translocation. NADP(+) is bound by residues 74–80 (GSTDGIG) and Asp125. Ser205 contributes to the substrate binding site. Tyr218 acts as the Proton acceptor in catalysis. An NADP(+)-binding site is contributed by Lys222.

This sequence belongs to the short-chain dehydrogenases/reductases (SDR) family. 17-beta-HSD 3 subfamily.

The protein localises to the mitochondrion. In terms of biological role, may catalyze the metabolism of steroid hormones and thus play an important role in sex differentiation, the emergence and maintenance of the secondary sexual characters, and the regulation of endocrine. The polypeptide is Hydroxysteroid dehydrogenase-like protein 1 (HSDL1) (Gallus gallus (Chicken)).